A 238-amino-acid polypeptide reads, in one-letter code: Orotidine 5'-phosphate decarboxylase (238 aa).

Residues aspartate 18, lysine 40, 67–76 (DMKLLDIDNT), threonine 122, arginine 183, glutamine 192, and arginine 213 each bind substrate. Lysine 69 (proton donor) is an active-site residue.

The protein belongs to the OMP decarboxylase family. Type 1 subfamily. In terms of assembly, homodimer.

The catalysed reaction is orotidine 5'-phosphate + H(+) = UMP + CO2. The protein operates within pyrimidine metabolism; UMP biosynthesis via de novo pathway; UMP from orotate: step 2/2. Catalyzes the decarboxylation of orotidine 5'-monophosphate (OMP) to uridine 5'-monophosphate (UMP). In Brucella abortus (strain S19), this protein is Orotidine 5'-phosphate decarboxylase.